The following is a 210-amino-acid chain: Na(+)-translocating NADH-quinone reductase subunit D (210 aa).

Transmembrane regions (helical) follow at residues 42–62, 72–92, 103–123, 131–151, and 178–198; these read FVMT…VSLI, IIVQ…VLKA, VFVS…AFAM, FIDG…VAFF, and NGLM…IWAI.

This sequence belongs to the NqrDE/RnfAE family. As to quaternary structure, composed of six subunits; NqrA, NqrB, NqrC, NqrD, NqrE and NqrF.

Its subcellular location is the cell inner membrane. It carries out the reaction a ubiquinone + n Na(+)(in) + NADH + H(+) = a ubiquinol + n Na(+)(out) + NAD(+). Its function is as follows. NQR complex catalyzes the reduction of ubiquinone-1 to ubiquinol by two successive reactions, coupled with the transport of Na(+) ions from the cytoplasm to the periplasm. NqrA to NqrE are probably involved in the second step, the conversion of ubisemiquinone to ubiquinol. This Aliivibrio fischeri (strain ATCC 700601 / ES114) (Vibrio fischeri) protein is Na(+)-translocating NADH-quinone reductase subunit D.